The sequence spans 357 residues: Holliday junction branch migration complex subunit RuvB (357 aa).

The disordered stretch occupies residues 1–27 (MGRFSNADGPGDDADEREVTPALTVGE). Residues 1–195 (MGRFSNADGP…FGFTAHMDFY (195 aa)) form a large ATPase domain (RuvB-L) region. ATP contacts are provided by residues Leu-34, Arg-35, Gly-76, Lys-79, Thr-80, Ser-81, 142-144 (EDF), Arg-185, Tyr-195, and Arg-232. Mg(2+) is bound at residue Thr-80. Residues 196 to 266 (EPAELERVLA…IAKYALEVYD (71 aa)) form a small ATPAse domain (RuvB-S) region. Residues 269–357 (ELGLDRLDRA…GGLGQVGLFE (89 aa)) form a head domain (RuvB-H) region. DNA-binding residues include Arg-324 and Arg-329.

Belongs to the RuvB family. As to quaternary structure, homohexamer. Forms an RuvA(8)-RuvB(12)-Holliday junction (HJ) complex. HJ DNA is sandwiched between 2 RuvA tetramers; dsDNA enters through RuvA and exits via RuvB. An RuvB hexamer assembles on each DNA strand where it exits the tetramer. Each RuvB hexamer is contacted by two RuvA subunits (via domain III) on 2 adjacent RuvB subunits; this complex drives branch migration. In the full resolvosome a probable DNA-RuvA(4)-RuvB(12)-RuvC(2) complex forms which resolves the HJ.

Its subcellular location is the cytoplasm. It catalyses the reaction ATP + H2O = ADP + phosphate + H(+). In terms of biological role, the RuvA-RuvB-RuvC complex processes Holliday junction (HJ) DNA during genetic recombination and DNA repair, while the RuvA-RuvB complex plays an important role in the rescue of blocked DNA replication forks via replication fork reversal (RFR). RuvA specifically binds to HJ cruciform DNA, conferring on it an open structure. The RuvB hexamer acts as an ATP-dependent pump, pulling dsDNA into and through the RuvAB complex. RuvB forms 2 homohexamers on either side of HJ DNA bound by 1 or 2 RuvA tetramers; 4 subunits per hexamer contact DNA at a time. Coordinated motions by a converter formed by DNA-disengaged RuvB subunits stimulates ATP hydrolysis and nucleotide exchange. Immobilization of the converter enables RuvB to convert the ATP-contained energy into a lever motion, pulling 2 nucleotides of DNA out of the RuvA tetramer per ATP hydrolyzed, thus driving DNA branch migration. The RuvB motors rotate together with the DNA substrate, which together with the progressing nucleotide cycle form the mechanistic basis for DNA recombination by continuous HJ branch migration. Branch migration allows RuvC to scan DNA until it finds its consensus sequence, where it cleaves and resolves cruciform DNA. This is Holliday junction branch migration complex subunit RuvB from Mycolicibacterium gilvum (strain PYR-GCK) (Mycobacterium gilvum (strain PYR-GCK)).